A 329-amino-acid chain; its full sequence is MAFTPFPPRQPAASARLPLTLISLEDWALATITGPDSEKYLQGQVTADVTELGENQHLLVAHCDAKGKMWSNLRLFRHGDGFAWIERRSVRDTQLAEMKKYAVFSKVTIAPNDDAVLLGVAGFQARAALANHFATLPDEQNPRVVDGATTLLWFGLPAERFMVITDAETASQLSDKLHGEAQLNASAQWLALDIEAGFPVIDAPNSNQFIPQATNIQALGGISFKKGCYAGQEMVARAKFRGANKRSLWYLAGHGSRVPQPGEDIEMQMGENWRRTGTVLAAVQLDDGRLLAQVVMNNDLETGTLFRVREESGAHTLHIEPLPYSLEEA.

Folate is bound by residues W27 and W189.

This sequence belongs to the tRNA-modifying YgfZ family.

The protein localises to the cytoplasm. Functionally, folate-binding protein involved in regulating the level of ATP-DnaA and in the modification of some tRNAs. It is probably a key factor in regulatory networks that act via tRNA modification, such as initiation of chromosomal replication. This chain is tRNA-modifying protein YgfZ, found in Cronobacter sakazakii (strain ATCC BAA-894) (Enterobacter sakazakii).